The following is an 862-amino-acid chain: Kinesin-like protein KIN-7E (862 aa).

A Kinesin motor domain is found at 24-346; that stretch reads KILVLVRLRP…LLFACCAKEV (323 aa). 110–117 is an ATP binding site; that stretch reads GQTSSGKT. Residues 355–428 adopt a coiled-coil conformation; the sequence is VMSDKALVKQ…RLEDFMKMVE (74 aa). 2 disordered regions span residues 463 to 505 and 542 to 632; these read RTSF…QSEE and ANGE…TPLV. Polar residues predominate over residues 465-476; it reads SFISDGTSTPLS. Basic and acidic residues predominate over residues 494-505; sequence MSPRHSGDQSEE. Residues 612-621 are compositionally biased toward polar residues; sequence DSMTSRGSDS. Residue Lys734 forms a Glycyl lysine isopeptide (Lys-Gly) (interchain with G-Cter in ubiquitin) linkage.

It belongs to the TRAFAC class myosin-kinesin ATPase superfamily. Kinesin family. KIN-7 subfamily.

The protein is Kinesin-like protein KIN-7E of Arabidopsis thaliana (Mouse-ear cress).